Reading from the N-terminus, the 919-residue chain is GPI ethanolamine phosphate transferase 1 (919 aa).

Residues 1–8 (MWSRHRLY) lie on the Cytoplasmic side of the membrane. Residues 9-29 (FIVAGVLFHLFYLWSIFDIYF) form a helical membrane-spanning segment. The Lumenal portion of the chain corresponds to 30 to 456 (VSPLVHGMKQ…TTYNWRFIRT (427 aa)). N138, N196, N201, N285, and N311 each carry an N-linked (GlcNAc...) asparagine glycan. A helical membrane pass occupies residues 457-477 (IVTLGFLGWIVYSFSIFLRLF). Residues 478–487 (ILNRDYNSHK) lie on the Cytoplasmic side of the membrane. Residues 488 to 508 (SLLNYFIFGSLTIILNYVLYY) traverse the membrane as a helical segment. Topologically, residues 509-510 (QK) are lumenal. The chain crosses the membrane as a helical span at residues 511-531 (APFNYYMYLFFPLIFWSEIFT). Residues 532–558 (DRVVLDDGVKEFLKGISIPKRIILVSA) are Cytoplasmic-facing. Residues 559-579 (IILVYESIVYAFFDRWIFSLI) traverse the membrane as a helical segment. At 580-598 (FNMLSFYPLICGYRDWKRN) the chain is on the lumenal side. The chain crosses the membrane as a helical span at residues 599-619 (TLWFITGAAISVFTLLDAVKI). E620 is a topological domain (cytoplasmic). A helical transmembrane segment spans residues 621–641 (SLTQINIASGLIVLTALSGFL). Over 642–653 (HLRKQLNSYTTT) the chain is Lumenal. A helical membrane pass occupies residues 654-674 (VFICQILLVILMVLATNKSIV). The Cytoplasmic segment spans residues 675–686 (SLQNRTGLPRDA). A helical transmembrane segment spans residues 687 to 707 (QVAGWVILVVSLLLMPLIHYM). At 708-718 (KPNNNYKVRML) the chain is on the lumenal side. Residues 719-739 (IIFLTFAPTFIILTISFESFF) traverse the membrane as a helical segment. Residues 740–773 (YLVFSAYIVQWIEIESKLKEQTPNTSHYKQLIRV) lie on the Cytoplasmic side of the membrane. A helical transmembrane segment spans residues 774 to 794 (TIIGFFLLQNAFFGTGNVASI). Over 795 to 815 (SSFSLDSVYRLMPIFDPFPMG) the chain is Lumenal. A helical transmembrane segment spans residues 816-836 (ALLVIKLIIPYIILSAGLGIL). Residues 837–845 (NLKLHIKDY) are Cytoplasmic-facing. The chain crosses the membrane as a helical span at residues 846–866 (TISTLIISTSDILSLNFFYLL). Topologically, residues 867 to 882 (KTEGSWLDIGITISNY) are lumenal. The chain crosses the membrane as a helical span at residues 883–903 (CLAILSSLFMLILEIVAHVVL). At 904-919 (KNVQLSKPVIASKKTN) the chain is on the cytoplasmic side.

It belongs to the PIGG/PIGN/PIGO family. PIGN subfamily.

The protein localises to the endoplasmic reticulum membrane. It participates in glycolipid biosynthesis; glycosylphosphatidylinositol-anchor biosynthesis. In terms of biological role, ethanolamine phosphate transferase involved in glycosylphosphatidylinositol-anchor biosynthesis. Transfers ethanolamine phosphate to the first alpha-1,4-linked mannose of the glycosylphosphatidylinositol precursor of GPI-anchor. The polypeptide is GPI ethanolamine phosphate transferase 1 (MCD4) (Kluyveromyces lactis (strain ATCC 8585 / CBS 2359 / DSM 70799 / NBRC 1267 / NRRL Y-1140 / WM37) (Yeast)).